Consider the following 302-residue polypeptide: MNSERAQVANPPTQTPVPQQQEIPLAMVHGQPVLQIPQDLYIPPDALEVILDAFEGPLDLLLYLIRRQNLNILDIPVAEITRQYVDYINVMQELRFELAAEYLVMAAILAEIKSRMLLPRPPNIENEEGEDPRAELVRRLQEYERFKQAAEDLDALPRLDRDNSAAHAFVADQTTVRIPPPVNMKELLLALQDVLKRAELFSGHAIRREALSVRQRMGDILAHLEDGKFHPFTTLFTAEEGKLGVLVTFLAILELAKEQLLDIVQEASLGPIYIKSLAIHHTNGPLQLSSDFDNSPSTHAPP.

The protein belongs to the ScpA family. Component of a cohesin-like complex composed of ScpA, ScpB and the Smc homodimer, in which ScpA and ScpB bind to the head domain of Smc. The presence of the three proteins is required for the association of the complex with DNA.

It is found in the cytoplasm. Functionally, participates in chromosomal partition during cell division. May act via the formation of a condensin-like complex containing Smc and ScpB that pull DNA away from mid-cell into both cell halves. The sequence is that of Segregation and condensation protein A from Xylella fastidiosa (strain 9a5c).